The chain runs to 287 residues: Phosphatidylglycerol--prolipoprotein diacylglyceryl transferase (287 aa).

The next 4 membrane-spanning stretches (helical) occupy residues 26–46, 71–91, 106–126, and 132–152; these read VAIRWYGLAYVTGILIGWWLA, FLVWAAIGIVLGGRIGYILFY, IWRGGMSFHGGLTGATLAMIV, and GLPVWMLFDLVACVAPIGLFF. Arg-154 is an a 1,2-diacyl-sn-glycero-3-phospho-(1'-sn-glycerol) binding site. 3 helical membrane passes run 187-207, 217-237, and 251-271; these read SQLYEAALEGLVLFVLLQVLA, GVISGVFICGYALARIFVEFF, and WLTMGMLLSLPMLALGLWAIW.

It belongs to the Lgt family.

The protein localises to the cell inner membrane. The catalysed reaction is L-cysteinyl-[prolipoprotein] + a 1,2-diacyl-sn-glycero-3-phospho-(1'-sn-glycerol) = an S-1,2-diacyl-sn-glyceryl-L-cysteinyl-[prolipoprotein] + sn-glycerol 1-phosphate + H(+). Its pathway is protein modification; lipoprotein biosynthesis (diacylglyceryl transfer). In terms of biological role, catalyzes the transfer of the diacylglyceryl group from phosphatidylglycerol to the sulfhydryl group of the N-terminal cysteine of a prolipoprotein, the first step in the formation of mature lipoproteins. This Allorhizobium ampelinum (strain ATCC BAA-846 / DSM 112012 / S4) (Agrobacterium vitis (strain S4)) protein is Phosphatidylglycerol--prolipoprotein diacylglyceryl transferase.